The chain runs to 90 residues: MSRIAKAAGVALGTGAVVLSGTGMAMADAGAAGAAVGSPGVLSGNVVQVPVHVPVNLCGNTIDVIGLLNPAFGNACENGDDDDKSGGYGG.

The signal sequence occupies residues methionine 1 to alanine 27. The Chaplin domain occupies serine 38–asparagine 78. Cysteine 58 and cysteine 76 are joined by a disulfide.

The protein belongs to the chaplin family. Short chaplin subfamily.

Its subcellular location is the cell surface. The protein resides in the secreted. It localises to the cell wall. One of 8 partially redundant surface-active proteins required for efficient formation of aerial mycelium; the short chaplins assemble into a hydrophobic, amyloidal fibrillar surface layer that envelopes and protects aerial hyphae and spores, presumably anchored to the long chaplins. Chaplins have an overlapping function with the surface-active SapB peptide; chaplins are essential on minimal medium while on rich medium both chaplins and SapB are required for efficient aerial hyphae formation. Chaplins are also involved in cell attachment to a hydrophobic surface. Forms amyloid fibrils in vitro probably composed of stacked beta-sheets, at low extracellular concentrations individually restores the ability to form aerial hyphae to a chaplin-deficient strain. A small chaplin extract (ChpD, ChpE, ChpF, ChpG and ChpH) self-assembles into 2 different amyloids; small fibrils at the air-water interface form an amphipathic membrane that resembles spore-surface structures involved in aerial hyphae formation, and hydrophilic fibrils in solution that resemble the fibers that attach cells to a hydrophobic surface. At the air-water interface the hydrophilic surface is in contact with water (probably equivalent to the peptidoglycan layer), while the hydrophobic face is exposed to the air, making the surface of the aerial hyphae hydrophobic. A small chaplin extract applied to a chaplin-deficient strain restores aerial hyphae formation. The small chaplin extract forms an amyloid-like structure similar to that seen on the surface of cells without rodlets (rdlA-rdlB deletions), and is highly surface active, reducing surface tension from 72 to 26 mJ/m(2), which probably allows escape of hyphae from an aqueous environment into air. ChpF and ChpG are sufficient to restore the rodlet layer and hydrophobicity to a strain deleted for the other 6 chaplin genes. In Streptomyces coelicolor (strain ATCC BAA-471 / A3(2) / M145), this protein is Chaplin-G.